The sequence spans 467 residues: tRNA-2-methylthio-N(6)-dimethylallyladenosine synthase (467 aa).

The MTTase N-terminal domain occupies 5 to 125 (RKLHIKSYGC…LPQLLAQASR (121 aa)). The [4Fe-4S] cluster site is built by Cys-14, Cys-50, Cys-88, Cys-166, Cys-170, and Cys-173. The Radical SAM core domain maps to 152-384 (RARGVSAFVT…QSLIDSQQAA (233 aa)). Residues 387 to 449 (KAAIGSVVDV…RYSLLGELVA (63 aa)) form the TRAM domain.

It belongs to the methylthiotransferase family. MiaB subfamily. Monomer. Requires [4Fe-4S] cluster as cofactor.

The protein resides in the cytoplasm. It carries out the reaction N(6)-dimethylallyladenosine(37) in tRNA + (sulfur carrier)-SH + AH2 + 2 S-adenosyl-L-methionine = 2-methylsulfanyl-N(6)-dimethylallyladenosine(37) in tRNA + (sulfur carrier)-H + 5'-deoxyadenosine + L-methionine + A + S-adenosyl-L-homocysteine + 2 H(+). Functionally, catalyzes the methylthiolation of N6-(dimethylallyl)adenosine (i(6)A), leading to the formation of 2-methylthio-N6-(dimethylallyl)adenosine (ms(2)i(6)A) at position 37 in tRNAs that read codons beginning with uridine. The protein is tRNA-2-methylthio-N(6)-dimethylallyladenosine synthase of Bradyrhizobium sp. (strain ORS 278).